Consider the following 199-residue polypeptide: Charged multivesicular body protein 1B2 (199 aa).

The stretch at 15-47 (AKELNRNAKKCDKEEKAEKAKIKKAIQKGNTEV) forms a coiled coil. Residues 132 to 156 (MEDTMSSTTTLTTPQNQVDMLLQEM) are interaction with IST1. Residues 167-199 (ELPQGQTGSVGASVASTEQDELSQRLARLRDQV) are disordered. The span at 170–183 (QGQTGSVGASVAST) shows a compositional bias: polar residues. The interval 174–199 (GSVGASVASTEQDELSQRLARLRDQV) is interaction with SPAST. The stretch at 177–199 (GASVASTEQDELSQRLARLRDQV) forms a coiled coil. The segment at 180–196 (VASTEQDELSQRLARLR) is interaction with VPS4A, MITD1 and STAMBP. The tract at residues 180–199 (VASTEQDELSQRLARLRDQV) is interaction with VTA1. Residues 183 to 199 (TEQDELSQRLARLRDQV) are interaction with VPS4B. Residues 186-196 (DELSQRLARLR) carry the MIT-interacting motif motif.

The protein belongs to the SNF7 family. As to quaternary structure, probable peripherally associated component of the endosomal sorting required for transport complex III (ESCRT-III). ESCRT-III components are thought to multimerize to form a flat lattice on the perimeter membrane of the endosome. Several assembly forms of ESCRT-III may exist that interact and act sequentially. Interacts with CHMP1A. Interacts with VTA1; the interaction probably involves the open conformation of CHMP1B. Interacts with CHMP2A. Interacts with VPS4A; the interaction is direct. Interacts with VPS4B; the interaction is direct. Interacts with SPAST (via MIT domain); the interaction is direct. Interacts with IST1. Interacts with MITD1. Interacts with STAMBP.

The protein resides in the cytoplasm. It is found in the cytosol. It localises to the endosome. Its subcellular location is the late endosome membrane. Its function is as follows. Probable peripherally associated component of the endosomal sorting required for transport complex III (ESCRT-III) which is involved in multivesicular bodies (MVBs) formation and sorting of endosomal cargo proteins into MVBs. MVBs contain intraluminal vesicles (ILVs) that are generated by invagination and scission from the limiting membrane of the endosome and mostly are delivered to lysosomes enabling degradation of membrane proteins, such as stimulated growth factor receptors, lysosomal enzymes and lipids. The MVB pathway appears to require the sequential function of ESCRT-O, -I,-II and -III complexes. ESCRT-III proteins mostly dissociate from the invaginating membrane before the ILV is released. The ESCRT machinery also functions in topologically equivalent membrane fission events, such as the terminal stages of cytokinesis. ESCRT-III proteins are believed to mediate the necessary vesicle extrusion and/or membrane fission activities, possibly in conjunction with the AAA ATPase VPS4. Involved in cytokinesis. Involved in recruiting VPS4A and/or VPS4B and SPAST to the midbody of dividing cells. This is Charged multivesicular body protein 1B2 from Mus musculus (Mouse).